The following is a 373-amino-acid chain: MQFFTALAAVGALVAPALALPTQVPANQSLIDVQLSATGNSMIKAVITNKGTRALNLLKFNTIMDENPTAKVMVFDKNGAEVEFTGMLPRYDMNSLSTDYFATLAPQASVEHSFDIAATHNIKESGKYTLSAHGLIPTAEEHGTTITGQAFYESNTLEMEIDASKAAMVPRAFEELDAHIVGTIDKRSGIVTSSCDASQLRIVKQALANSRMLALNAARAASSNPSKVREYFGSSDSSIMQKVASRFQSVARESTASGGQTTYHCTDNRGSCKPGVLAYTLPSTNTVYNCPSYYREPSLTKRCHAQDQATTTLHELTHNPVVVSPFCKDLGYGYRLATGLPTSKAIQNADNYALFANEESSPVFFVPVFYSNG.

The N-terminal stretch at 1 to 19 is a signal peptide; it reads MQFFTALAAVGALVAPALA. Positions 20 to 187 are excised as a propeptide; sequence LPTQVPANQS…AHIVGTIDKR (168 aa). 2 cysteine pairs are disulfide-bonded: cysteine 195-cysteine 265 and cysteine 272-cysteine 290. Residue histidine 314 coordinates Zn(2+). Residue glutamate 315 is part of the active site. Zn(2+) contacts are provided by histidine 318 and aspartate 329.

The protein belongs to the peptidase M35 family. Zn(2+) serves as cofactor.

It is found in the secreted. It catalyses the reaction Preferential cleavage of bonds with hydrophobic residues in P1'. Also 3-Asn-|-Gln-4 and 8-Gly-|-Ser-9 bonds in insulin B chain.. Functionally, probable secreted metalloprotease that shows high activities on basic nuclear substrates such as histone and protamine. May be involved in virulence. In Arthroderma otae (strain ATCC MYA-4605 / CBS 113480) (Microsporum canis), this protein is Probable neutral protease 2 homolog MCYG_05201.